The primary structure comprises 417 residues: Succinate--CoA ligase [ADP-forming] subunit beta, mitochondrial (417 aa).

The transit peptide at 1–24 (MLRKLANQSLSVAGKWQQQQLRRL) directs the protein to the mitochondrion. One can recognise an ATP-grasp domain in the interval 32–275 (AELMSKYGIN…SSQEDPREVA (244 aa)). Residues Lys71, 78–80 (GRG), and Glu138 each bind ATP. Asn230 and Asp244 together coordinate Mg(2+). Residues Asn295 and 352-354 (GIM) contribute to the substrate site.

It belongs to the succinate/malate CoA ligase beta subunit family. As to quaternary structure, heterodimer of an alpha and a beta subunit. It depends on Mg(2+) as a cofactor. In terms of tissue distribution, expressed in roots, stems, flowers, leaves and fruits.

It localises to the mitochondrion. It catalyses the reaction succinate + ATP + CoA = succinyl-CoA + ADP + phosphate. The protein operates within carbohydrate metabolism; tricarboxylic acid cycle; succinate from succinyl-CoA (ligase route): step 1/1. Its function is as follows. Succinyl-CoA synthetase functions in the citric acid cycle (TCA), coupling the hydrolysis of succinyl-CoA to the synthesis of ATP and thus represents the only step of substrate-level phosphorylation in the TCA. The beta subunit provides nucleotide specificity of the enzyme and binds the substrate succinate, while the binding sites for coenzyme A and phosphate are found in the alpha subunit. In Solanum lycopersicum (Tomato), this protein is Succinate--CoA ligase [ADP-forming] subunit beta, mitochondrial.